Reading from the N-terminus, the 287-residue chain is Elongation factor Ts (287 aa).

Positions 80–83 (TDFL) are involved in Mg(2+) ion dislocation from EF-Tu.

This sequence belongs to the EF-Ts family.

It is found in the cytoplasm. Functionally, associates with the EF-Tu.GDP complex and induces the exchange of GDP to GTP. It remains bound to the aminoacyl-tRNA.EF-Tu.GTP complex up to the GTP hydrolysis stage on the ribosome. This Pseudomonas putida (strain ATCC 700007 / DSM 6899 / JCM 31910 / BCRC 17059 / LMG 24140 / F1) protein is Elongation factor Ts.